A 203-amino-acid polypeptide reads, in one-letter code: Peptide deformylase (203 aa).

Fe cation contacts are provided by Cys130 and His173. Glu174 is a catalytic residue. A Fe cation-binding site is contributed by His177.

The protein belongs to the polypeptide deformylase family. Requires Fe(2+) as cofactor.

The catalysed reaction is N-terminal N-formyl-L-methionyl-[peptide] + H2O = N-terminal L-methionyl-[peptide] + formate. Functionally, removes the formyl group from the N-terminal Met of newly synthesized proteins. Requires at least a dipeptide for an efficient rate of reaction. N-terminal L-methionine is a prerequisite for activity but the enzyme has broad specificity at other positions. This chain is Peptide deformylase, found in Streptococcus pneumoniae serotype 19F (strain G54).